We begin with the raw amino-acid sequence, 186 residues long: Serine hydrolase RBBP9 (186 aa).

Residues 63–67 (LHCDE) form an involved in binding to RB1 region. Residues S75, D138, and H165 each act as charge relay system in the active site.

This sequence belongs to the RBBP9 family. In terms of assembly, interacts with RB1; the interaction disrupts RB1 binding to E2F1. Interacts with RBL1 and RBL2. As to expression, expressed at higher levels in tumor tissues such as carcinoma.

It catalyses the reaction valacyclovir + H2O = acyclovir + L-valine + H(+). Inhibited by the natural product emetine produced by the ipecac root. In terms of biological role, serine hydrolase. Catalyzes the hydrolytic activation of amino acid ester of the antiviral prodrug valacyclovir to its corresponding active drug, acyclovir. May negatively regulate basal or autocrine TGF-beta signaling by suppressing SMAD2-SMAD3 phosphorylation. May play a role in the transformation process due to its capacity to confer resistance to the growth-inhibitory effects of TGF-beta through interaction with RB1 and the subsequent displacement of E2F1. This is Serine hydrolase RBBP9 from Homo sapiens (Human).